We begin with the raw amino-acid sequence, 143 residues long: MAKKIVGFIKLQVPAGKANPSPPIGPALGQRGLNIMEFCKAFNAQTQGVEPGLPLPVVITAFADKSFTFIIKTPPATTLIKKAIKLEKGSASALSTKVGKITRAQLEEIAKTKMKDMNAANVDAAVRTLAGSARSMGVTVEGL.

Belongs to the universal ribosomal protein uL11 family. Part of the ribosomal stalk of the 50S ribosomal subunit. Interacts with L10 and the large rRNA to form the base of the stalk. L10 forms an elongated spine to which L12 dimers bind in a sequential fashion forming a multimeric L10(L12)X complex. Post-translationally, one or more lysine residues are methylated.

Its function is as follows. Forms part of the ribosomal stalk which helps the ribosome interact with GTP-bound translation factors. The sequence is that of Large ribosomal subunit protein uL11 from Verminephrobacter eiseniae (strain EF01-2).